A 516-amino-acid chain; its full sequence is MALSQFVPFSATELLLTSTVFCLVFWVFKGLRPRVPKGLKSPPEPWRWPLLGHVLTLGKNPHLALTKMSQRYGDVLQIHIGSTPVVVLSGLDTIRQALVRQGDDFKGRPDLYSFTLITDGQSMSFSPDSGPVWAARRRLAQNALNTFSIASDPASSSSCYLEEHVSKEAEALIGRLQELMAGPGRFDPYNQIVESVVKVIGAMCFGQHFPESSDEMLSLMKNSHVFVENATSGNPVDFFPILRYLPNPALQRFKAFNQRFLRFLRETVQEHYQDSDKNSVQDITGALFKHCEKRSGASGDLIPQEKIVNLVNDIFGAGFDTITTAISWSLMYLVTKPEIQRKIQKELDTVIGRGRRPRLSDRPQLPYLEAFILETFRHSSFVPFTIPHSTTRDTTLKGFYIPKECCVFINQWQVNHDPQLWGDPSEFRPERFLTAKGTALNKPLSEKILLFGLGKRRCIGEVLGKWEVFLFLAILLQQLEFSVPPGVQIDLTPTYGLTMKHARCEHVQARLRFSFQ.

Serine 69 carries O-linked (GlcNAc) serine glycosylation. Substrate is bound at residue phenylalanine 226. Heme is bound at residue cysteine 458.

The protein belongs to the cytochrome P450 family. As to quaternary structure, interacts with PGRMC1; the interaction requires PGRMC1 homodimerization. It depends on heme as a cofactor.

Its subcellular location is the endoplasmic reticulum membrane. It localises to the microsome membrane. The catalysed reaction is an organic molecule + reduced [NADPH--hemoprotein reductase] + O2 = an alcohol + oxidized [NADPH--hemoprotein reductase] + H2O + H(+). It catalyses the reaction 17beta-estradiol + reduced [NADPH--hemoprotein reductase] + O2 = 2-hydroxy-17beta-estradiol + oxidized [NADPH--hemoprotein reductase] + H2O + H(+). It carries out the reaction 17beta-estradiol + reduced [NADPH--hemoprotein reductase] + O2 = 4-hydroxy-17beta-estradiol + oxidized [NADPH--hemoprotein reductase] + H2O + H(+). The enzyme catalyses estrone + reduced [NADPH--hemoprotein reductase] + O2 = 2-hydroxyestrone + oxidized [NADPH--hemoprotein reductase] + H2O + H(+). The catalysed reaction is estrone + reduced [NADPH--hemoprotein reductase] + O2 = 4-hydroxyestrone + oxidized [NADPH--hemoprotein reductase] + H2O + H(+). It catalyses the reaction cholesterol + reduced [NADPH--hemoprotein reductase] + O2 = 25-hydroxycholesterol + oxidized [NADPH--hemoprotein reductase] + H2O + H(+). It carries out the reaction all-trans-retinol + reduced [NADPH--hemoprotein reductase] + O2 = all-trans-retinal + oxidized [NADPH--hemoprotein reductase] + 2 H2O + H(+). The enzyme catalyses all-trans-retinal + reduced [NADPH--hemoprotein reductase] + O2 = all-trans-retinoate + oxidized [NADPH--hemoprotein reductase] + H2O + 2 H(+). The catalysed reaction is (5Z,8Z,11Z,14Z)-eicosatetraenoate + reduced [NADPH--hemoprotein reductase] + O2 = (14R,15S)-epoxy-(5Z,8Z,11Z)-eicosatrienoate + oxidized [NADPH--hemoprotein reductase] + H2O + H(+). It catalyses the reaction (5Z,8Z,11Z,14Z)-eicosatetraenoate + reduced [NADPH--hemoprotein reductase] + O2 = (14S,15R)-epoxy-(5Z,8Z,11Z)-eicosatrienoate + oxidized [NADPH--hemoprotein reductase] + H2O + H(+). It carries out the reaction (5Z,8Z,11Z,14Z,17Z)-eicosapentaenoate + reduced [NADPH--hemoprotein reductase] + O2 = (17R,18S)-epoxy-(5Z,8Z,11Z,14Z)-eicosatetraenoate + oxidized [NADPH--hemoprotein reductase] + H2O + H(+). The enzyme catalyses (4Z,7Z,10Z,13Z,16Z,19Z)-docosahexaenoate + reduced [NADPH--hemoprotein reductase] + O2 = (19R,20S)-epoxy-(4Z,7Z,10Z,13Z,16Z)-docosapentaenoate + oxidized [NADPH--hemoprotein reductase] + H2O + H(+). The catalysed reaction is (5S)-hydroperoxy-(6E,8Z,11Z,14Z)-eicosatetraenoate = 5-oxo-(6E,8Z,11Z,14Z)-eicosatetraenoate + H2O. It catalyses the reaction (12S)-hydroperoxy-(5Z,8Z,10E,14Z)-eicosatetraenoate = 12-oxo-(5Z,8Z,10E,14Z)-eicosatetraenoate + H2O. It carries out the reaction (15S)-hydroperoxy-(5Z,8Z,11Z,13E)-eicosatetraenoate = 15-oxo-(5Z,8Z,11Z,13E)-eicosatetraenoate + H2O. The enzyme catalyses (13S)-hydroperoxy-(9Z,11E)-octadecadienoate = 13-oxo-(9Z,11E)-octadecadienoate + H2O. The catalysed reaction is (5Z,8Z,11Z,14Z)-eicosatetraenoate + reduced [NADPH--hemoprotein reductase] + O2 = 13-hydroxy-(5Z,8Z,11Z,14Z)-eicosatetraenoate + oxidized [NADPH--hemoprotein reductase] + H2O + H(+). It catalyses the reaction (5Z,8Z,11Z,14Z)-eicosatetraenoate + reduced [NADPH--hemoprotein reductase] + O2 = 19-hydroxy-(5Z,8Z,11Z,14Z)-eicosatetraenoate + oxidized [NADPH--hemoprotein reductase] + H2O + H(+). It carries out the reaction (9Z,12Z)-octadecadienoate + reduced [NADPH--hemoprotein reductase] + O2 = 11-hydroxy-(9Z,12Z)-octadecadienoate + oxidized [NADPH--hemoprotein reductase] + H2O + H(+). It participates in cofactor metabolism; retinol metabolism. The protein operates within steroid metabolism; cholesterol metabolism. Its pathway is lipid metabolism; arachidonate metabolism. A cytochrome P450 monooxygenase involved in the metabolism of various endogenous substrates, including fatty acids, steroid hormones and vitamins. Mechanistically, uses molecular oxygen inserting one oxygen atom into a substrate, and reducing the second into a water molecule, with two electrons provided by NADPH via cytochrome P450 reductase (NADPH--hemoprotein reductase). Catalyzes the hydroxylation of carbon-hydrogen bonds. Exhibits high catalytic activity for the formation of hydroxyestrogens from estrone (E1) and 17beta-estradiol (E2), namely 2-hydroxy E1 and E2. Metabolizes cholesterol toward 25-hydroxycholesterol, a physiological regulator of cellular cholesterol homeostasis. May act as a major enzyme for all-trans retinoic acid biosynthesis in the liver. Catalyzes two successive oxidative transformation of all-trans retinol to all-trans retinal and then to the active form all-trans retinoic acid. Primarily catalyzes stereoselective epoxidation of the last double bond of polyunsaturated fatty acids (PUFA), displaying a strong preference for the (R,S) stereoisomer. Catalyzes bisallylic hydroxylation and omega-1 hydroxylation of PUFA. May also participate in eicosanoids metabolism by converting hydroperoxide species into oxo metabolites (lipoxygenase-like reaction, NADPH-independent). Plays a role in the oxidative metabolism of xenobiotics. Catalyzes the N-hydroxylation of heterocyclic amines and the O-deethylation of phenacetin. Metabolizes caffeine via N3-demethylation. The protein is Cytochrome P450 1A2 (CYP1A2) of Callithrix jacchus (White-tufted-ear marmoset).